Reading from the N-terminus, the 99-residue chain is Large ribosomal subunit protein uL23 (99 aa).

This sequence belongs to the universal ribosomal protein uL23 family. As to quaternary structure, part of the 50S ribosomal subunit. Contacts protein L29, and trigger factor when it is bound to the ribosome.

One of the early assembly proteins it binds 23S rRNA. One of the proteins that surrounds the polypeptide exit tunnel on the outside of the ribosome. Forms the main docking site for trigger factor binding to the ribosome. The protein is Large ribosomal subunit protein uL23 of Ectopseudomonas mendocina (strain ymp) (Pseudomonas mendocina).